The following is a 727-amino-acid chain: NADH-ubiquinone oxidoreductase 75 kDa subunit, mitochondrial (727 aa).

The N-terminal 23 residues, 1-23 (MLRIPIKRALIGLSNSPKGYVRT), are a transit peptide targeting the mitochondrion. The 2Fe-2S ferredoxin-type domain occupies 30–108 (NLIEVFVDGQ…GWNILTNSEK (79 aa)). The [2Fe-2S] cluster site is built by Cys64, Cys75, and Cys78. Lys84 carries the N6-acetyllysine modification. Cys92 is a [2Fe-2S] cluster binding site. Residues 108 to 147 (KSKKAREGVMEFLLANHPLDCPICDQGGECDLQDQSMMFG) form the 4Fe-4S His(Cys)3-ligated-type domain. [4Fe-4S] cluster-binding residues include His124, Cys128, Cys131, Cys137, Cys176, Cys179, Cys182, and Cys226. The region spanning 245–301 (TRKTESIDVMDAVGSNIVVSTRTGEVMRILPRMHEDINEEWISDKTRFAYDGLKRQR) is the 4Fe-4S Mo/W bis-MGD-type domain. At Ser461 the chain carries Phosphoserine. Residues Lys467, Lys499, and Lys709 each carry the N6-acetyllysine modification.

Belongs to the complex I 75 kDa subunit family. Core subunit of respiratory chain NADH dehydrogenase (Complex I) which is composed of 45 different subunits. This is the largest subunit of complex I and it is a component of the iron-sulfur (IP) fragment of the enzyme. Complex I associates with ubiquinol-cytochrome reductase complex (Complex III) to form supercomplexes. In astrocytes, less complex I is assembled into supercomplexes as compared to neurons. Interacts with MDM2. Interacts with AKAP1. It depends on [2Fe-2S] cluster as a cofactor. The cofactor is [4Fe-4S] cluster. In terms of processing, acetylation of Lys-84 is observed in liver mitochondria from fasted mice but not from fed mice. In terms of tissue distribution, brain. More abundant in neurons than in astrocytes (at protein level).

Its subcellular location is the mitochondrion inner membrane. It catalyses the reaction a ubiquinone + NADH + 5 H(+)(in) = a ubiquinol + NAD(+) + 4 H(+)(out). Functionally, core subunit of the mitochondrial membrane respiratory chain NADH dehydrogenase (Complex I) which catalyzes electron transfer from NADH through the respiratory chain, using ubiquinone as an electron acceptor. Essential for catalysing the entry and efficient transfer of electrons within complex I. Plays a key role in the assembly and stability of complex I and participates in the association of complex I with ubiquinol-cytochrome reductase complex (Complex III) to form supercomplexes. This chain is NADH-ubiquinone oxidoreductase 75 kDa subunit, mitochondrial (Ndufs1), found in Mus musculus (Mouse).